A 66-amino-acid chain; its full sequence is MFREYKMYKFFEQVKQETYKVFWPNRKELIASTLVVVAAVFIFSLICLVLDYSIHNIMQLLLTIGK.

A helical membrane pass occupies residues 29–49 (LIASTLVVVAAVFIFSLICLV).

It belongs to the SecE/SEC61-gamma family. In terms of assembly, component of the Sec protein translocase complex. Heterotrimer consisting of SecY, SecE and SecG subunits. The heterotrimers can form oligomers, although 1 heterotrimer is thought to be able to translocate proteins. Interacts with the ribosome. Interacts with SecDF, and other proteins may be involved. Interacts with SecA.

The protein resides in the cell inner membrane. Its function is as follows. Essential subunit of the Sec protein translocation channel SecYEG. Clamps together the 2 halves of SecY. May contact the channel plug during translocation. The chain is Protein translocase subunit SecE from Rickettsia typhi (strain ATCC VR-144 / Wilmington).